The chain runs to 66 residues: Movement protein TGBp3 (66 aa).

The Lumenal segment spans residues 1 to 2; it reads MD. A helical membrane pass occupies residues 3 to 23; it reads FTTLIIIGVYLLVFIVYFAKI. Topologically, residues 24–66 are cytoplasmic; it reads NTSVCTISISGASIEISGCDNPTLFEILPKLRPFNHGLSLPSN.

This sequence belongs to the Tymovirales TGBp3 protein family.

It is found in the host endoplasmic reticulum membrane. In terms of biological role, plays a role in viral cell-to-cell propagation, by facilitating genome transport to neighboring plant cells through plasmosdesmata. May induce the formation of granular vesicles derived from the Endoplasmic reticulum, which align on actin filaments. This chain is Movement protein TGBp3, found in Trifolium (WCMV).